The sequence spans 557 residues: Tripeptidyl-peptidase 1 (557 aa).

A signal peptide spans 1 to 16 (MRVAVFVLSFIWLVNG). Residues 17–190 (ELLEADQDAV…WEGARQAILG (174 aa)) constitute a propeptide, removed in mature form. The N-linked (GlcNAc...) asparagine glycan is linked to Asn-53. A disulfide bridge connects residues Cys-107 and Cys-118. The region spanning 194–557 (GVTPAVIRNR…YPVFLASLMD (364 aa)) is the Peptidase S53 domain. N-linked (GlcNAc...) asparagine glycosylation is found at Asn-205 and Asn-216. Active-site charge relay system residues include Glu-266 and Asp-270. 3 N-linked (GlcNAc...) asparagine glycosylation sites follow: Asn-280, Asn-307, and Asn-438. Intrachain disulfides connect Cys-359-Cys-521 and Cys-517-Cys-532. Ser-470 (charge relay system) is an active-site residue. Asp-512 and Val-513 together coordinate Ca(2+). Position 538 (Asp-538) interacts with Ca(2+).

It depends on Ca(2+) as a cofactor. Post-translationally, activated by autocatalytic proteolytical processing.

It localises to the lysosome. It catalyses the reaction Release of an N-terminal tripeptide from a polypeptide, but also has endopeptidase activity.. Its function is as follows. Lysosomal serine protease with tripeptidyl-peptidase I activity. May act as a non-specific lysosomal peptidase which generates tripeptides from the breakdown products produced by lysosomal proteinases. Requires substrates with an unsubstituted N-terminus. In Danio rerio (Zebrafish), this protein is Tripeptidyl-peptidase 1.